The primary structure comprises 162 residues: EF-hand calcium-binding domain-containing protein 11 (162 aa).

3 EF-hand domains span residues 18-53 (SERRKWVKVFKACDEDNKGYLSREDFKVAIVMLFGY), 91-126 (LYRNEIRQIFTAFDVHYRGFLTLEDFKRAFSRVAPK), and 127-162 (LPARTVLEVFREADQDSDGHVSFRDFEYAMNHGQSK). Residues Asp-140, Asp-142, Asp-144, His-146, and Asp-151 each contribute to the Ca(2+) site.

The sequence is that of EF-hand calcium-binding domain-containing protein 11 (Efcab11) from Mus musculus (Mouse).